A 71-amino-acid polypeptide reads, in one-letter code: cAMP-dependent protein kinase inhibitor beta (71 aa).

Positions 1–21 (MTDVESVISSFASSARAGRRN) are disordered. Thr2 carries the blocked amino end (Thr) modification. Phosphoserine is present on Ser35. The tract at residues 51 to 71 (AKMKNEEKDQGQPKKPLDEDK) is disordered.

This sequence belongs to the PKI family. As to expression, testis.

Functionally, extremely potent competitive inhibitor of cAMP-dependent protein kinase activity, this protein interacts with the catalytic subunit of the enzyme after the cAMP-induced dissociation of its regulatory chains. This is cAMP-dependent protein kinase inhibitor beta (Pkib) from Rattus norvegicus (Rat).